The primary structure comprises 269 residues: Integral membrane protein 2C (269 aa).

Residue Thr-39 is modified to Phosphothreonine. The chain crosses the membrane as a helical; Signal-anchor for type II membrane protein span at residues 57–77; sequence VGGVCYLSMGMVVLLMGLVFA. The BRICHOS domain maps to 138–232; the sequence is FGGGDPADII…LCNGKDTYRL (95 aa). An intrachain disulfide couples Cys-165 to Cys-224. Residue Asn-171 is glycosylated (N-linked (GlcNAc...) asparagine).

It belongs to the ITM2 family. Interacts with BACE1. Interacts with APP. Interacts with STMN2. In terms of processing, type I membrane-bound, as well as soluble, furin has a pre-eminent role in ITM2C proteolytic processing. PCSK7 and PCSK5 may also be involved although to a lesser extent. The soluble form of PCSK7 is incapable of processing ITM2C. Fails to undergo shedding by ADAM10 and intramembrane cleavage by SPPL2B.

It is found in the lysosome membrane. Its subcellular location is the cell membrane. In terms of biological role, negative regulator of amyloid-beta peptide production. May inhibit the processing of APP by blocking its access to alpha- and beta-secretase. Binding to the beta-secretase-cleaved APP C-terminal fragment is negligible, suggesting that ITM2C is a poor gamma-secretase cleavage inhibitor. May play a role in TNF-induced cell death and neuronal differentiation. This is Integral membrane protein 2C (ITM2C) from Sus scrofa (Pig).